The following is a 2381-amino-acid chain: Highly reducing polyketide synthase virA (2381 aa).

The Ketosynthase family 3 (KS3) domain occupies 1-420; it reads MDALHLACHL…GANGHVILES (420 aa). Active-site for beta-ketoacyl synthase activity residues include Cys-171, His-306, and His-344. The tract at residues 535–851 is malonyl-CoA:ACP transacylase (MAT) domain; it reads VFTGQGAQYA…PYSPTLVRKE (317 aa). Catalysis depends on Ser-629, which acts as the For malonyltransferase activity. The segment at 920–1064 is N-terminal hotdog fold; it reads HELLGTRATA…GSIRVMESTL (145 aa). The tract at residues 920–1232 is dehydratase (DH) domain; the sequence is HELLGTRATA…HLRMNEYTGK (313 aa). The PKS/mFAS DH domain maps to 920-1235; sequence HELLGTRATA…MNEYTGKAPV (316 aa). The active-site Proton acceptor; for dehydratase activity is the His-952. The segment at 1078–1235 is C-terminal hotdog fold; it reads HEVWGMSRWY…MNEYTGKAPV (158 aa). The Proton donor; for dehydratase activity role is filled by Asp-1144. Positions 1639 to 1956 are enoyl reductase (ER) domain; sequence GMTDTIHFQQ…NKDRVGKVVV (318 aa). The segment at 1981-2159 is ketoreductase (KR) domain; the sequence is TYLLVGCLGG…AVSVGLGMIS (179 aa). One can recognise a Carrier domain in the interval 2297-2375; that stretch reads TMLDAILRLT…TLAEFIEEKL (79 aa). O-(pantetheine 4'-phosphoryl)serine is present on Ser-2334.

It participates in secondary metabolite biosynthesis. Functionally, highly reducing polyketide synthase; part of the gene cluster that mediates the biosynthesis of virensols and trichoxide, fungal natural products that contain or are derived from a salicylaldehyde core. The pathway begins with the synthesis of the reduced chain in virensol C by the highly reducing polyketide synthase virA via condensation of one acetate and 8 malonate units. VirA has interesting programming rules since the first 2 ketides are fully reduced, the 3 following ketides undergo beta-dehydration, and the last 3 ketides are only reduced to beta-hydroxys to yield the trihydroxy portion. The production of aldehyde virensol C by virA alone is surprising, since virA does not contain a reductase (R) domain that is typically associated with reductive product release in HRPKS. The cupin-domain enzyme virC is involved in enhancing virA product turnover. The short-chain dehydrogenase virB then oxidizes the C-7 alcohol of virensol C to a ketone, yielding virensol D. Virensol D is further transformed to salicylaldehyde 5-deoxyaurocitrin by the short-chain dehydrogenase virD. VirD catalyzes the dehydrogenation of C-3 to form the beta-ketone aldehyde, which is followed by the generation of the nucleophilic C-2 that is required for the intramolecular aldol condensation between C-2 and C-7, itself followed by dehydration and aromatization which leads to salicylaldehyde 5-deoxyaurocitrin. While the dehydrogenation of virensol D is definitely catalyzed by virD, the aldol condensation and dehydration may be uncatalyzed or assisted by virD. The short chain dehydrogenase virG then converts salicylaldehyde 5-deoxyaurocitrin into virensol B which is further hydroxylated by the cytochrome P450 monooxygenase virE to yield the hydroquinone virensol A. VirI then may oxidize virensol A to form the quinone, while virH performs the epoxidation. Finally, the two remaining short-chain dehydrogenases, virK and virL, are probably responsible for reducing the ketones to the corresponding alcohols to furnish the epoxycyclohexanol structure in trichoxide. This chain is Highly reducing polyketide synthase virA, found in Hypocrea virens (strain Gv29-8 / FGSC 10586) (Gliocladium virens).